Consider the following 65-residue polypeptide: Large ribosomal subunit protein bL35 (65 aa).

The protein belongs to the bacterial ribosomal protein bL35 family.

This Parabacteroides distasonis (strain ATCC 8503 / DSM 20701 / CIP 104284 / JCM 5825 / NCTC 11152) protein is Large ribosomal subunit protein bL35.